The following is a 100-amino-acid chain: Small ribosomal subunit protein bS6 (100 aa).

This sequence belongs to the bacterial ribosomal protein bS6 family.

Functionally, binds together with bS18 to 16S ribosomal RNA. This Tropheryma whipplei (strain TW08/27) (Whipple's bacillus) protein is Small ribosomal subunit protein bS6.